Here is a 112-residue protein sequence, read N- to C-terminus: ATP synthase epsilon chain (112 aa).

The protein belongs to the ATPase epsilon chain family. As to quaternary structure, F-type ATPases have 2 components, CF(1) - the catalytic core - and CF(0) - the membrane proton channel. CF(1) has five subunits: alpha(3), beta(3), gamma(1), delta(1), epsilon(1). CF(0) has three main subunits: a, b and c.

It localises to the cell inner membrane. Produces ATP from ADP in the presence of a proton gradient across the membrane. The protein is ATP synthase epsilon chain of Rickettsia peacockii (strain Rustic).